The chain runs to 101 residues: MSLQVSHYNMLRASHEGSQKVVVRTVITVRFVPGAAIAKSILYCAGQLVFKESGHHLTGTDTIYFVTVRLHMHNSTYSSIFCFSMSVLLSRRRVSGDLTCR.

This is an uncharacterized protein from Escherichia coli (strain K12).